A 185-amino-acid chain; its full sequence is Ribosome-recycling factor (185 aa).

This sequence belongs to the RRF family.

It localises to the cytoplasm. Its function is as follows. Responsible for the release of ribosomes from messenger RNA at the termination of protein biosynthesis. May increase the efficiency of translation by recycling ribosomes from one round of translation to another. The polypeptide is Ribosome-recycling factor (Rhodospirillum centenum (strain ATCC 51521 / SW)).